The chain runs to 561 residues: Liver carboxylesterase B-1 (561 aa).

Residues 1 to 18 (MCLRSLFLVSLATCVVCG) form the signal peptide. N-linked (GlcNAc...) asparagine glycosylation is present at asparagine 79. Residues cysteine 87 and cysteine 116 are joined by a disulfide bond. Serine 221 (acyl-ester intermediate) is an active-site residue. An intrachain disulfide couples cysteine 273 to cysteine 284. Residues glutamate 353 and histidine 466 each act as charge relay system in the active site. The short motif at 558–561 (HNEL) is the Prevents secretion from ER element.

Belongs to the type-B carboxylesterase/lipase family. As to quaternary structure, monomer.

Its subcellular location is the endoplasmic reticulum lumen. The enzyme catalyses a carboxylic ester + H2O = an alcohol + a carboxylate + H(+). Functionally, involved in the detoxification of xenobiotics and in the activation of ester and amide prodrugs. The polypeptide is Liver carboxylesterase B-1 (Rattus norvegicus (Rat)).